A 143-amino-acid chain; its full sequence is Hexaprenyl-diphosphate synthase small subunit ((2E,6E)-farnesyl-diphosphate specific) (143 aa).

Dimer of heterodimer or heterotetramer composed of a small (Hexs-a) and large (Hexs-B) subunit.

It catalyses the reaction 3 isopentenyl diphosphate + (2E,6E)-farnesyl diphosphate = all-trans-hexaprenyl diphosphate + 3 diphosphate. Functionally, catalyzes the condensation of three molecules of isopentenyl diphosphate with farnesyl diphosphate (FPP) to yield (all-E)-hexaprenyl diphosphate (HexPP; C30), the precursor of the prenyl side chain of menaquinone-6. Large subunit Hexs-B catalyzes the condensation reaction and the final product chain length is cooperatively regulated by both the Hexs-A and Hexs-B subunits using the whole size of the hydrophobic cleft as a ruler. The polypeptide is Hexaprenyl-diphosphate synthase small subunit ((2E,6E)-farnesyl-diphosphate specific) (hexs-a) (Micrococcus luteus (Micrococcus lysodeikticus)).